A 192-amino-acid chain; its full sequence is Peptidyl-tRNA hydrolase (192 aa).

Tyr17 is a binding site for tRNA. His22 acts as the Proton acceptor in catalysis. TRNA is bound by residues Tyr68, Asn70, and Asn116.

Belongs to the PTH family. In terms of assembly, monomer.

Its subcellular location is the cytoplasm. It catalyses the reaction an N-acyl-L-alpha-aminoacyl-tRNA + H2O = an N-acyl-L-amino acid + a tRNA + H(+). Its function is as follows. Hydrolyzes ribosome-free peptidyl-tRNAs (with 1 or more amino acids incorporated), which drop off the ribosome during protein synthesis, or as a result of ribosome stalling. In terms of biological role, catalyzes the release of premature peptidyl moieties from peptidyl-tRNA molecules trapped in stalled 50S ribosomal subunits, and thus maintains levels of free tRNAs and 50S ribosomes. The chain is Peptidyl-tRNA hydrolase from Mycolicibacterium gilvum (strain PYR-GCK) (Mycobacterium gilvum (strain PYR-GCK)).